The sequence spans 474 residues: Probable threonine--tRNA ligase, mitochondrial (474 aa).

The transit peptide at 1-27 (MMKLKKFQLHTPFAHSCNRVEIYTARF) directs the protein to the mitochondrion.

This sequence belongs to the class-II aminoacyl-tRNA synthetase family.

It is found in the mitochondrion matrix. It carries out the reaction tRNA(Thr) + L-threonine + ATP = L-threonyl-tRNA(Thr) + AMP + diphosphate + H(+). The chain is Probable threonine--tRNA ligase, mitochondrial from Schizosaccharomyces pombe (strain 972 / ATCC 24843) (Fission yeast).